The primary structure comprises 444 residues: Tubulin beta chain (444 aa).

GTP-binding residues include Gln11, Glu69, Ser138, Gly142, Thr143, Gly144, Asn204, and Asn226. Glu69 contacts Mg(2+).

The protein belongs to the tubulin family. Dimer of alpha and beta chains. A typical microtubule is a hollow water-filled tube with an outer diameter of 25 nm and an inner diameter of 15 nM. Alpha-beta heterodimers associate head-to-tail to form protofilaments running lengthwise along the microtubule wall with the beta-tubulin subunit facing the microtubule plus end conferring a structural polarity. Microtubules usually have 13 protofilaments but different protofilament numbers can be found in some organisms and specialized cells. Mg(2+) serves as cofactor.

The protein resides in the cytoplasm. It is found in the cytoskeleton. Its function is as follows. Tubulin is the major constituent of microtubules, a cylinder consisting of laterally associated linear protofilaments composed of alpha- and beta-tubulin heterodimers. Microtubules grow by the addition of GTP-tubulin dimers to the microtubule end, where a stabilizing cap forms. Below the cap, tubulin dimers are in GDP-bound state, owing to GTPase activity of alpha-tubulin. This is Tubulin beta chain (TBB) from Onchocerca gibsoni.